The following is a 7705-amino-acid chain: Copine family protein 2 (7705 aa).

9 disordered regions span residues 1–61 (MNDY…RHSE), 269–360 (KEGN…NNSQ), 372–408 (SERK…HQQP), 464–492 (GDRA…TSSV), 506–538 (STEP…TADG), 560–614 (DERA…QGPP), 1301–1358 (NRSE…DQQV), 4381–4427 (ELEP…RSES), and 6779–6800 (RDEH…GKFT). Positions 12–25 (SSQKSNNQKISNNS) are enriched in low complexity. Basic and acidic residues predominate over residues 269-282 (KEGNNPSCCRERGT). Residues 302 to 313 (STSTKVAVTSAS) are compositionally biased toward low complexity. The span at 318-336 (IKDHKKQLKKEKEKKKKMD) shows a compositional bias: basic residues. Basic and acidic residues predominate over residues 372–404 (SERKTAKQREQELLQRSERRSGGRTHSHEEYRR). Polar residues predominate over residues 522-532 (ASLSSVQQKQP). A compositionally biased stretch (basic and acidic residues) spans 560-587 (DERAKDFLRGDRSSRLSPQSERKNERQI). Polar residues predominate over residues 588-597 (QIRQQSSGPT). Basic and acidic residues-rich tracts occupy residues 598 to 611 (NRRE…EKRQ) and 1301 to 1335 (NRSE…HTSE). Residues 4397–4409 (RQSRVYRSSSQVR) are compositionally biased toward low complexity. Composition is skewed to basic and acidic residues over residues 4411–4427 (PSEE…RSES) and 6779–6797 (RDEH…RDGG). The 199-residue stretch at 7475–7673 (NLIFGIDYTK…FHKVMFNAPN (199 aa)) folds into the VWFA domain.

The protein belongs to the copine family. Expressed in body wall muscle.

The chain is Copine family protein 2 (cpna-2) from Caenorhabditis elegans.